A 448-amino-acid chain; its full sequence is ATP-dependent protease ATPase subunit HslU (448 aa).

Residues I23, 65 to 70 (GIGKTE), D263, E327, and R399 each bind ATP.

It belongs to the ClpX chaperone family. HslU subfamily. A double ring-shaped homohexamer of HslV is capped on each side by a ring-shaped HslU homohexamer. The assembly of the HslU/HslV complex is dependent on binding of ATP.

The protein resides in the cytoplasm. Functionally, ATPase subunit of a proteasome-like degradation complex; this subunit has chaperone activity. The binding of ATP and its subsequent hydrolysis by HslU are essential for unfolding of protein substrates subsequently hydrolyzed by HslV. HslU recognizes the N-terminal part of its protein substrates and unfolds these before they are guided to HslV for hydrolysis. This chain is ATP-dependent protease ATPase subunit HslU, found in Borreliella burgdorferi (strain ATCC 35210 / DSM 4680 / CIP 102532 / B31) (Borrelia burgdorferi).